A 400-amino-acid polypeptide reads, in one-letter code: Subtilisin-like protease 7 (400 aa).

The first 20 residues, 1–20 (MGFITKAIPLALAAASVING), serve as a signal peptide directing secretion. Residues 21–119 (AEILETRAGV…IERDARVQIN (99 aa)) constitute a propeptide that is removed on maturation. The 83-residue stretch at 36-118 (KYIVVMNDGM…YIERDARVQI (83 aa)) folds into the Inhibitor I9 domain. Residues 129-400 (SWGLARVGSK…GKLINNGSGK (272 aa)) form the Peptidase S8 domain. Residues D161 and H192 each act as charge relay system in the active site. The N-linked (GlcNAc...) asparagine glycan is linked to N252. S346 functions as the Charge relay system in the catalytic mechanism. Residue N396 is glycosylated (N-linked (GlcNAc...) asparagine).

Belongs to the peptidase S8 family.

The protein localises to the secreted. Functionally, secreted subtilisin-like serine protease with keratinolytic activity that contributes to pathogenicity. The chain is Subtilisin-like protease 7 (SUB7) from Arthroderma gypseum (strain ATCC MYA-4604 / CBS 118893) (Microsporum gypseum).